Consider the following 178-residue polypeptide: Gamma-crystallin S (178 aa).

Serine 2 carries the N-acetylserine modification. The N-terminal arm stretch occupies residues 2–5; it reads SKTG. 2 Beta/gamma crystallin 'Greek key' domains span residues 6–44 and 45–87; these read GKIS…RVEG and GTWA…RAVH. Positions 88–93 are connecting peptide; sequence LSSGGQ. 2 Beta/gamma crystallin 'Greek key' domains span residues 94–134 and 135–177; these read AKIQ…KVVE and GTWI…RRIV.

The protein belongs to the beta/gamma-crystallin family. Monomer.

Its function is as follows. Crystallins are the dominant structural components of the vertebrate eye lens. This is Gamma-crystallin S (Crygs) from Mus musculus (Mouse).